Consider the following 446-residue polypeptide: Sensor-type histidine kinase PrrB (446 aa).

Transmembrane regions (helical) follow at residues 19 to 39 (VVAT…VVWV) and 151 to 171 (LLIC…LAAF). Residues 172 to 222 (AVRPFKQLAEQTRSIDAGDEAPRVEVHGASEAIEIAEAMRGMLQRIWNEQN) form the HAMP domain. The Histidine kinase domain maps to 237–446 (VSSHELRTPL…RLVLRLPGPS (210 aa)). His240 bears the Phosphohistidine; by autocatalysis mark.

Post-translationally, autophosphorylated.

It is found in the cell membrane. It carries out the reaction ATP + protein L-histidine = ADP + protein N-phospho-L-histidine.. Its function is as follows. Member of the two-component regulatory system PrrB/PrrA that is involved specifically in early intracellular multiplication of Mycobacterium and is essential for its viability. Functions as a sensor protein kinase which is autophosphorylated at a histidine residue and transfers its phosphate group to the conserved aspartic acid residue in the regulatory domain of PrrA. In turn, PrrA binds to the upstream promoter regions of target genes including itself to positively regulate their expression. The protein is Sensor-type histidine kinase PrrB (prrB) of Mycobacterium bovis (strain ATCC BAA-935 / AF2122/97).